The chain runs to 132 residues: Insulin-like 3 (132 aa).

The N-terminal stretch at 1 to 21 is a signal peptide; it reads MDRRPLTWALVLLGPALAIAL. Position 27 is a pyrrolidone carboxylic acid (Q27). 3 cysteine pairs are disulfide-bonded: C34–C117, C46–C130, and C116–C121. The propeptide at 67–104 is c peptide like; the sequence is LLRWLEGQHLLHGLMASGDPVLVLAPQPLPQASRHHHH.

The protein belongs to the insulin family. In terms of assembly, heterodimer of a B chain and an A chain linked by two disulfide bonds. 20% of B chains include an extra N-terminal pentapeptide. In terms of tissue distribution, expressed exclusively in Leydig cells of the testis.

The protein resides in the secreted. Functionally, seems to play a role in testicular function. May be a trophic hormone with a role in testicular descent in fetal life. Is a ligand for LGR8 receptor. In Bos taurus (Bovine), this protein is Insulin-like 3 (INSL3).